A 666-amino-acid chain; its full sequence is MAVSWIVFDLWLLTVFLGQIGGHSLFSCEPITLRMCQDLPYNTTFMPNLLNHYDQQTAALAMEPFHPMVNLDCSRDFRPFLCALYAPICMEYGRVTLPCRRLCQRAYSECSKLMEMFGVPWPEDMECSRFPDCDEPYPRLVDLNLVGDPTEGAPVAVQRDYGFWCPRELKIDPDLGYSFLHVRDCSPPCPNMYFRREELSFARYFIGLISIICLSATLFTFLTFLIDVTRFRYPERPIIFYAVCYMMVSLIFFIGFLLEDRVACNASSPAQYKASTVTQGSHNKACTMLFMVLYFFTMAGSVWWVILTITWFLAAVPKWGSEAIEKKALLFHASAWGIPGTLTIILLAMNKIEGDNISGVCFVGLYDVDALRYFVLAPLCLYVVVGVSLLLAGIISLNRVRIEIPLEKENQDKLVKFMIRIGVFSILYLVPLLVVIGCYFYEQAYRGIWETTWIQERCREYHIPCPYQVTQMSRPDLILFLMKYLMALIVGIPSIFWVGSKKTCFEWASFFHGRRKKEIVNESRQVLQEPDFAQSLLRDPNTPIIRKSRGTSTQGTSTHASSTQLAMVDDQRSKAGSVHSKVSSYHGSLHRSRDGRYTPCSYRGMEERLPHGSMSRLTDHSRHSSSHRLNEQSRHSSIRDLSNNPMTHITHGTSMNRVIEEDGTSA.

Residues 1 to 22 form the signal peptide; the sequence is MAVSWIVFDLWLLTVFLGQIGG. One can recognise an FZ domain in the interval 23–136; sequence HSLFSCEPIT…CSRFPDCDEP (114 aa). The Extracellular portion of the chain corresponds to 23–205; it reads HSLFSCEPIT…REELSFARYF (183 aa). Disulfide bonds link Cys-28–Cys-89, Cys-36–Cys-82, Cys-73–Cys-110, Cys-99–Cys-133, and Cys-103–Cys-127. Asn-42 is a glycosylation site (N-linked (GlcNAc...) asparagine). The chain crosses the membrane as a helical span at residues 206-226; it reads IGLISIICLSATLFTFLTFLI. Over 227 to 237 the chain is Cytoplasmic; it reads DVTRFRYPERP. The helical transmembrane segment at 238–258 threads the bilayer; sequence IIFYAVCYMMVSLIFFIGFLL. Topologically, residues 259–288 are extracellular; that stretch reads EDRVACNASSPAQYKASTVTQGSHNKACTM. The N-linked (GlcNAc...) asparagine glycan is linked to Asn-265. A helical membrane pass occupies residues 289–309; sequence LFMVLYFFTMAGSVWWVILTI. At 310 to 328 the chain is on the cytoplasmic side; it reads TWFLAAVPKWGSEAIEKKA. Residues 329-349 form a helical membrane-spanning segment; the sequence is LLFHASAWGIPGTLTIILLAM. Topologically, residues 350 to 374 are extracellular; the sequence is NKIEGDNISGVCFVGLYDVDALRYF. The N-linked (GlcNAc...) asparagine glycan is linked to Asn-356. A helical transmembrane segment spans residues 375–395; it reads VLAPLCLYVVVGVSLLLAGII. The Cytoplasmic portion of the chain corresponds to 396-420; it reads SLNRVRIEIPLEKENQDKLVKFMIR. The helical transmembrane segment at 421–441 threads the bilayer; sequence IGVFSILYLVPLLVVIGCYFY. Topologically, residues 442–477 are extracellular; that stretch reads EQAYRGIWETTWIQERCREYHIPCPYQVTQMSRPDL. A helical membrane pass occupies residues 478-498; it reads ILFLMKYLMALIVGIPSIFWV. Over 499–666 the chain is Cytoplasmic; that stretch reads GSKKTCFEWA…RVIEEDGTSA (168 aa). The Lys-Thr-X-X-X-Trp motif, mediates interaction with the PDZ domain of Dvl family members signature appears at 502 to 507; the sequence is KTCFEW. The interval 538–666 is disordered; it reads RDPNTPIIRK…RVIEEDGTSA (129 aa). Positions 550-565 are enriched in polar residues; that stretch reads GTSTQGTSTHASSTQL. Basic and acidic residues predominate over residues 617–638; sequence LTDHSRHSSSHRLNEQSRHSSI. Positions 639–656 are enriched in polar residues; that stretch reads RDLSNNPMTHITHGTSMN.

Belongs to the G-protein coupled receptor Fz/Smo family. In terms of assembly, interacts with VANGL2. In terms of processing, ubiquitinated by ZNRF3, leading to its degradation by the proteasome. As to expression, expressed in the cortex, diencephalon, rostral brainstem and little or no staining is seen in the striatum or cerebellum. Expressed in both hair cells and supporting cells in the utricle, saccule, cristae and the organ of Corti in the inner ear (at protein level). Highly expressed in the CNS. In skin, it is restricted to the epidermis and to the developing hair follicle.

It localises to the membrane. The protein localises to the cell membrane. Its subcellular location is the cell surface. The protein resides in the apical cell membrane. In terms of biological role, receptor for Wnt proteins. Most of frizzled receptors are coupled to the beta-catenin canonical signaling pathway, which leads to the activation of disheveled proteins, inhibition of GSK-3 kinase, nuclear accumulation of beta-catenin and activation of Wnt target genes. A second signaling pathway involving PKC and calcium fluxes has been seen for some family members, but it is not yet clear if it represents a distinct pathway or if it can be integrated in the canonical pathway, as PKC seems to be required for Wnt-mediated inactivation of GSK-3 kinase. Both pathways seem to involve interactions with G-proteins. Activation by Wnt5A stimulates PKC activity via a G-protein-dependent mechanism. Involved in transduction and intercellular transmission of polarity information during tissue morphogenesis and/or in differentiated tissues. Plays a role in controlling early axon growth and guidance processes necessary for the formation of a subset of central and peripheral major fiber tracts. Required for the development of major fiber tracts in the central nervous system, including: the anterior commissure, the corpus callosum, the thalamocortical, corticothalamic and nigrostriatal tracts, the corticospinal tract, the fasciculus retroflexus, the mammillothalamic tract, the medial lemniscus, and ascending fiber tracts from the spinal cord to the brain. In the peripheral nervous system, controls axon growth in distinct populations of cranial and spinal motor neurons, including the facial branchimotor nerve, the hypoglossal nerve, the phrenic nerve, and motor nerves innervating dorsal limbs. Involved in the migration of cranial neural crest cells. May also be implicated in the transmission of sensory information from the trunk and limbs to the brain. Controls commissural sensory axons guidance after midline crossing along the anterior-posterior axis in the developing spinal cord in a Wnt-dependent signaling pathway. Together with FZD6, is involved in the neural tube closure and plays a role in the regulation of the establishment of planar cell polarity (PCP), particularly in the orientation of asymmetric bundles of stereocilia on the apical faces of a subset of auditory and vestibular sensory cells located in the inner ear. Promotes neurogenesis by maintaining sympathetic neuroblasts within the cell cycle in a beta-catenin-dependent manner. This Mus musculus (Mouse) protein is Frizzled-3 (Fzd3).